The primary structure comprises 1838 residues: Collagen alpha-1(V) chain (1838 aa).

An N-terminal signal peptide occupies residues 1–37 (MDVHTRWKARSALRPGAPLLPPLLLLLLWAPPPSRAA). Residues 72-244 (DVAYRVTKDA…DYCEHYSPDC (173 aa)) enclose the Laminin G-like domain. The tract at residues 231 to 443 (RAAYDYCEHY…MPANQDTIYE (213 aa)) is nonhelical region. A sulfotyrosine mark is found at Tyr234, Tyr236, Tyr240, Tyr262, and Tyr263. Disordered regions lie at residues 242–269 (PDCD…GDGE), 281–457 (EDPE…QKGE), 470–520 (PPGP…GTML), 526–545 (FGGG…QESQ), and 559–1574 (GPAG…EVIQ). Residues 258-269 (NPDEYYTEGDGE) show a composition bias toward acidic residues. The span at 285-304 (DLGKEPTPSKKPVEAAKETT) shows a compositional bias: basic and acidic residues. The span at 309–323 (ELTPTPTEAAPMPET) shows a compositional bias: low complexity. Sulfotyrosine occurs at positions 338, 340, 346, and 347. Residues 377-388 (PTSTADTSNSSN) show a composition bias toward polar residues. The segment covering 396 to 406 (GADDLEGEFTE) has biased composition (acidic residues). Tyr416, Tyr417, Tyr420, and Tyr421 each carry sulfotyrosine. A compositionally biased stretch (low complexity) spans 417–428 (YDPYYDPTSSPS). The interval 444–558 (GIGGPRGEKG…ILQQARLALR (115 aa)) is interrupted collagenous region. A compositionally biased stretch (pro residues) spans 470-485 (PPGPEGPAGLPGPPGT). Over residues 506–520 (LPGADGLPGPPGTML) the composition is skewed to low complexity. Residues 559–1570 (GPAGPMGLTG…GPPGPPGPPG (1012 aa)) form a triple-helical region region. Residues Pro570 and Pro576 each carry the hydroxyproline modification. Low complexity predominate over residues 587 to 597 (DVGPQGPRGVQ). Hydroxyproline is present on Pro621. At Lys627 the chain carries 5-hydroxylysine. At Pro639 the chain carries Hydroxyproline. Lys642 bears the 5-hydroxylysine mark. A hydroxyproline mark is found at Pro648, Pro654, Pro657, Pro675, and Pro678. The segment covering 671–686 (PRGLPGEPGPRGLLGP) has biased composition (low complexity). Lys687 is subject to 5-hydroxylysine. Positions 687 to 696 (KGPPGPPGPP) are enriched in pro residues. Pro690, Pro696, and Pro705 each carry hydroxyproline. At Lys708 the chain carries 5-hydroxylysine. Hydroxyproline is present on residues Pro717, Pro720, Pro726, and Pro732. Low complexity predominate over residues 722-741 (QQGNPGAQGLPGPQGAIGPP). Lys744 carries the post-translational modification 5-hydroxylysine. Positions 747-756 (LGKPGLPGMP) are enriched in low complexity. Hydroxyproline occurs at positions 750, 756, 762, 765, and 771. Lys774 carries the post-translational modification 5-hydroxylysine. A hydroxyproline mark is found at Pro780 and Pro789. Lys795, Lys804, Lys807, and Lys810 each carry 5-hydroxylysine. The residue at position 816 (Pro816) is a Hydroxyproline. A 5-hydroxylysine modification is found at Lys819. A Hydroxyproline modification is found at Pro834. The span at 837 to 846 (RGEDGPEGPK) shows a compositional bias: basic and acidic residues. Residue Lys846 is modified to 5-hydroxylysine. Hydroxyproline is present on Pro861. 5-hydroxylysine is present on Lys864. Over residues 867-876 (LGVPGLPGYP) the composition is skewed to low complexity. Pro870, Pro873, and Pro876 each carry hydroxyproline. Lys882 carries the post-translational modification 5-hydroxylysine. 2 positions are modified to hydroxyproline: Pro888 and Pro891. Lys897 carries the 5-hydroxylysine modification. Hydroxyproline is present on residues Pro903 and Pro906. Positions 908–917 (PRGQRGPTGP) are enriched in low complexity. Hydroxyproline occurs at positions 930 and 945. Low complexity-rich tracts occupy residues 971–990 (KDGL…QGKT) and 999–1011 (VGPQ…TGPM). A hydroxyproline mark is found at Pro1017, Pro1020, Pro1023, and Pro1029. The span at 1088-1104 (SPGERGPAGAAGPIGIP) shows a compositional bias: low complexity. Residues 1106–1115 (RPGPQGPPGP) are compositionally biased toward pro residues. Low complexity predominate over residues 1116 to 1140 (AGEKGAPGEKGPQGPAGRDGLQGPV). Hydroxyproline occurs at positions 1221 and 1224. Positions 1259–1268 (PSGAPGADGP) are enriched in low complexity. Pro residues-rich tracts occupy residues 1380-1398 (TGEP…PGPA) and 1454-1469 (SPGP…PPGL). Hydroxyproline is present on residues Pro1467 and Pro1470. Over residues 1485 to 1494 (PGLIGLIGPP) the composition is skewed to low complexity. The segment covering 1526–1541 (PIGPPGPPGLPGPPGP) has biased composition (pro residues). Low complexity predominate over residues 1542-1554 (KGAKGSSGPTGPK). The span at 1560–1569 (PGPPGPPGPP) shows a compositional bias: pro residues. Residues 1571–1605 (EVIQPLPIQASRTRRNIDASQLLDDGNGENYVDYA) are nonhelical region. Sulfotyrosine is present on residues Tyr1601 and Tyr1604. The propeptide at 1606–1838 (DGMEEIFGSL…FEVGPACFMG (233 aa)) is C-terminal propeptide. The Fibrillar collagen NC1 domain maps to 1609–1837 (EEIFGSLNSL…GFEVGPACFM (229 aa)). 3 cysteine pairs are disulfide-bonded: Cys1639–Cys1671, Cys1680–Cys1835, and Cys1746–Cys1789. Asp1657, Asn1659, Gln1660, Cys1662, and Asp1665 together coordinate Ca(2+).

Belongs to the fibrillar collagen family. Trimers of two alpha 1(V) and one alpha 2(V) chains in most tissues and trimers of one alpha 1(V), one alpha 2(V), and one alpha 3(V) chains in placenta. Interacts with CSPG4. Post-translationally, prolines at the third position of the tripeptide repeating unit (G-X-Y) are hydroxylated in some or all of the chains. In terms of processing, sulfated on 40% of tyrosines.

The protein localises to the secreted. Its subcellular location is the extracellular space. It localises to the extracellular matrix. Its function is as follows. Type V collagen is a member of group I collagen (fibrillar forming collagen). It is a minor connective tissue component of nearly ubiquitous distribution. Type V collagen binds to DNA, heparan sulfate, thrombospondin, heparin, and insulin. The chain is Collagen alpha-1(V) chain (COL5A1) from Homo sapiens (Human).